The following is a 1344-amino-acid chain: Myb-binding protein 1A (1344 aa).

The segment at 1-24 is disordered; the sequence is MAEMKSPTKAEPASPAEAPQGDRR. An N-acetylalanine modification is found at alanine 2. The segment at 2–580 is interaction with MYB; it reads AEMKSPTKAE…WDQMMSTLKE (579 aa). Serine 14 carries the post-translational modification Phosphoserine. N6-acetyllysine occurs at positions 69 and 156. 2 consecutive short sequence motifs (nuclear export signal) follow at residues 238-256 and 261-279; these read SEDN…ANSV and KLPD…ENKF. Disordered stretches follow at residues 696–752 and 1150–1344; these read NEDE…DVDP and PKSE…VQTP. The segment covering 708-730 has biased composition (basic and acidic residues); that stretch reads TDEKQLKHGEDADSDSEDSKNSE. The span at 731–746 shows a compositional bias: acidic residues; that stretch reads SDVDSEDGEESEEEDR. The segment covering 1150–1161 has biased composition (basic and acidic residues); it reads PKSEKKNVKDIP. Lysine 1151 participates in a covalent cross-link: Glycyl lysine isopeptide (Lys-Gly) (interchain with G-Cter in SUMO2). The interval 1154–1344 is required for nuclear and nucleolar localization; the sequence is KKNVKDIPSD…RVARRRVQTP (191 aa). Phosphoserine occurs at positions 1162 and 1166. Over residues 1170–1187 the composition is skewed to basic residues; it reads TKRKKKGFLPETKKRKKL. Serine 1189 is modified (phosphoserine). Phosphothreonine is present on threonine 1193. Serine 1221 and serine 1246 each carry phosphoserine. Over residues 1247–1256 the composition is skewed to low complexity; sequence PAPNNPTLSP. Position 1253 is a phosphothreonine (threonine 1253). At serine 1255 the chain carries Phosphoserine. Phosphothreonine occurs at positions 1258 and 1280. Serine 1283, serine 1305, and serine 1318 each carry phosphoserine. Positions 1301-1316 are enriched in basic residues; it reads VKRRSSQSALPKKRAR. Residues 1317-1329 are compositionally biased toward low complexity; it reads LSLVSRSPSLLQS. Residue arginine 1322 is modified to Citrulline. 3 positions are modified to phosphoserine: serine 1323, serine 1325, and serine 1329. Positions 1331–1344 are enriched in basic residues; it reads IRKRRVARRRVQTP.

Belongs to the MYBBP1A family. As to quaternary structure, binds to and represses JUN and MYB via the leucine zipper regions present in these proteins. Also binds to and represses PPARGC1A: this interaction is abrogated when PPARGC1A is phosphorylated by MAPK1/ERK. Binds to and stimulates transcription by AHR. Binds to KPNA2. Component of the B-WICH complex, at least composed of SMARCA5/SNF2H, BAZ1B/WSTF, SF3B1, DEK, MYO1C, ERCC6, MYBBP1A and DDX21. Interacts with CLOCK and CRY1. Citrullinated by PADI4.

It localises to the nucleus. The protein resides in the nucleolus. Its subcellular location is the cytoplasm. In terms of biological role, may activate or repress transcription via interactions with sequence specific DNA-binding proteins. Repression may be mediated at least in part by histone deacetylase activity (HDAC activity). Acts as a corepressor and in concert with CRY1, represses the transcription of the core circadian clock component PER2. Preferentially binds to dimethylated histone H3 'Lys-9' (H3K9me2) on the PER2 promoter. Has a role in rRNA biogenesis together with PWP1. The protein is Myb-binding protein 1A (Mybbp1a) of Rattus norvegicus (Rat).